A 382-amino-acid chain; its full sequence is Alkanesulfonate monooxygenase (382 aa).

Belongs to the SsuD family. Homotetramer.

It carries out the reaction an alkanesulfonate + FMNH2 + O2 = an aldehyde + FMN + sulfite + H2O + 2 H(+). Catalyzes the desulfonation of aliphatic sulfonates. The sequence is that of Alkanesulfonate monooxygenase from Yersinia pseudotuberculosis serotype IB (strain PB1/+).